Consider the following 244-residue polypeptide: Cyclin-Q (244 aa).

The protein belongs to the cyclin family. Cyclin-like FAM58 subfamily.

Its function is as follows. May be an activating cyclin for the cyclin-associated kinase CDK10. The sequence is that of Cyclin-Q (ccnq) from Xenopus laevis (African clawed frog).